The chain runs to 325 residues: Inner membrane protein YrbG (325 aa).

The Periplasmic portion of the chain corresponds to Met1–Thr5. Residues Ala6–Ala26 traverse the membrane as a helical segment. The Cytoplasmic portion of the chain corresponds to Ser27–Pro37. The chain crosses the membrane as a helical span at residues Leu38 to Leu58. The Periplasmic portion of the chain corresponds to Ala59 to Asp67. Residues Leu68 to Ala88 traverse the membrane as a helical segment. At Ala89–Glu104 the chain is on the cytoplasmic side. The helical transmembrane segment at Leu105 to Ser125 threads the bilayer. A topological domain (periplasmic) is located at residue Arg126. A helical transmembrane segment spans residues Ser127–Ala147. Topologically, residues Arg148–Asp169 are cytoplasmic. Residues Gly170–Thr190 traverse the membrane as a helical segment. Residues Arg191 to Thr198 are Periplasmic-facing. A helical transmembrane segment spans residues Val199–Gly219. Residues Thr220–Asn243 are Cytoplasmic-facing. A helical membrane pass occupies residues Ile244–Pro264. The Periplasmic portion of the chain corresponds to Gly265–Pro269. Residues Leu270–Cys290 form a helical membrane-spanning segment. Residues Trp291 to Gly302 lie on the Cytoplasmic side of the membrane. The chain crosses the membrane as a helical span at residues Val303–Leu323. The Periplasmic portion of the chain corresponds to Val324–Glu325.

The protein belongs to the Ca(2+):cation antiporter (CaCA) (TC 2.A.19) family.

The protein resides in the cell inner membrane. The protein is Inner membrane protein YrbG (yrbG) of Escherichia coli (strain K12).